A 665-amino-acid chain; its full sequence is Fermitin family homolog 3 (665 aa).

Tyr11 is modified (phosphotyrosine). The FERM domain occupies 229–556 (WLDSSRCLMQ…SLPDFGISYV (328 aa)). Residues 354 to 453 (DHLRIFRPRK…WMAGCRLASK (100 aa)) form the PH domain. Tyr502 carries the post-translational modification Phosphotyrosine. Thr589 bears the Phosphothreonine mark.

Belongs to the kindlin family. As to quaternary structure, interacts with ITGB1, ITGB2 and ITGB3 (via cytoplasmic tails).

The protein resides in the cell projection. It localises to the podosome. Functionally, plays a central role in cell adhesion in hematopoietic cells. Acts by activating the integrin beta-1-3 (ITGB1, ITGB2 and ITGB3). Required for integrin-mediated platelet adhesion and leukocyte adhesion to endothelial cells. Required for activation of integrin beta-2 (ITGB2) in polymorphonuclear granulocytes (PMNs). The polypeptide is Fermitin family homolog 3 (FERMT3) (Bos taurus (Bovine)).